The chain runs to 121 residues: Holin-like protein CidA 1 (121 aa).

The next 4 helical transmembrane spans lie at 7–24, 28–50, 62–81, and 91–113; these read SGQI…EWIA, HLPV…FNLV, LLKE…IRYR, and LILI…TELL.

Belongs to the CidA/LrgA family. CidA subfamily.

It is found in the cell membrane. Its function is as follows. Increases the activity of extracellular murein hydrolases possibly by mediating their export via hole formation. Inhibited by the antiholin-like proteins LrgAB. In an unstressed cell, the LrgAB products probably inhibit the function of the CidA protein. When a cell is stressed by the addition of antibiotics or by other factors in the environment, CidA possibly oligomerizes within the bacterial cell membrane, creating lesions that disrupt the proton motive force, which in turn results in loss of cell viability. These lesions are also hypothesized to regulate the subsequent cell lysis by either allowing the murein hydrolases access to the cell wall substrate and/or regulating their activity by a possible change in the cell wall pH that results from loss of membrane potential. The chain is Holin-like protein CidA 1 (cidA1) from Bacillus cereus (strain ATCC 14579 / DSM 31 / CCUG 7414 / JCM 2152 / NBRC 15305 / NCIMB 9373 / NCTC 2599 / NRRL B-3711).